Reading from the N-terminus, the 66-residue chain is DNA gyrase inhibitor YacG (66 aa).

The Zn(2+) site is built by cysteine 9, cysteine 12, cysteine 28, and cysteine 32. The interval 45-66 (HKIAGSQESEDELYSGDLEPRH) is disordered.

The protein belongs to the DNA gyrase inhibitor YacG family. Interacts with GyrB. Zn(2+) serves as cofactor.

Functionally, inhibits all the catalytic activities of DNA gyrase by preventing its interaction with DNA. Acts by binding directly to the C-terminal domain of GyrB, which probably disrupts DNA binding by the gyrase. The polypeptide is DNA gyrase inhibitor YacG (Pseudomonas putida (strain W619)).